Reading from the N-terminus, the 251-residue chain is Probable transcriptional regulatory protein MLBr00475 (251 aa).

Belongs to the TACO1 family.

The protein localises to the cytoplasm. This is Probable transcriptional regulatory protein MLBr00475 from Mycobacterium leprae (strain Br4923).